Reading from the N-terminus, the 204-residue chain is Glycerol-3-phosphate acyltransferase (204 aa).

The next 5 membrane-spanning stretches (helical) occupy residues 8 to 28 (ILIF…CYIF), 53 to 73 (VPAA…VVIA), 81 to 101 (FITA…IFFG), 116 to 136 (FGFS…VAII), and 155 to 175 (VIFT…IIIL).

The protein belongs to the PlsY family. As to quaternary structure, probably interacts with PlsX.

Its subcellular location is the cell inner membrane. It carries out the reaction an acyl phosphate + sn-glycerol 3-phosphate = a 1-acyl-sn-glycero-3-phosphate + phosphate. It functions in the pathway lipid metabolism; phospholipid metabolism. In terms of biological role, catalyzes the transfer of an acyl group from acyl-phosphate (acyl-PO(4)) to glycerol-3-phosphate (G3P) to form lysophosphatidic acid (LPA). This enzyme utilizes acyl-phosphate as fatty acyl donor, but not acyl-CoA or acyl-ACP. The sequence is that of Glycerol-3-phosphate acyltransferase from Francisella tularensis subsp. mediasiatica (strain FSC147).